The following is a 227-amino-acid chain: DNA repair protein RecO (227 aa).

The protein belongs to the RecO family.

In terms of biological role, involved in DNA repair and RecF pathway recombination. The protein is DNA repair protein RecO of Pseudomonas syringae pv. syringae (strain B728a).